A 506-amino-acid chain; its full sequence is Serine/threonine-protein kinase D6PKL1 (506 aa).

The interval 1–96 is disordered; the sequence is MASKYGSGVL…TCSSFSGNNK (96 aa). A compositionally biased stretch (basic and acidic residues) spans 12–23; that stretch reads ENKKEKGDKETP. Polar residues predominate over residues 24-54; the sequence is ETSYSSQSVSVNTLADQVSSTLSFAPSSDSK. Residues 55-67 are compositionally biased toward basic and acidic residues; sequence TGGEVKFNEKSDQ. A compositionally biased stretch (low complexity) spans 77-92; sequence STSSDISDESTCSSFS. The 334-residue stretch at 123–456 folds into the Protein kinase domain; the sequence is FRLLKRLGCG…ATEMKQHPFF (334 aa). ATP-binding positions include 129-137 and lysine 152; that span reads LGCGDIGTV. Aspartate 248 functions as the Proton acceptor in the catalytic mechanism. Positions 475–495 are disordered; it reads PVDYESAPATPAAATSTSVKS. Over residues 480–492 the composition is skewed to low complexity; it reads SAPATPAAATSTS.

This sequence belongs to the protein kinase superfamily. AGC Ser/Thr protein kinase family.

It localises to the cell membrane. It catalyses the reaction L-seryl-[protein] + ATP = O-phospho-L-seryl-[protein] + ADP + H(+). The enzyme catalyses L-threonyl-[protein] + ATP = O-phospho-L-threonyl-[protein] + ADP + H(+). Its function is as follows. Protein kinase that regulates the auxin transport activity of PIN auxin efflux facilitators by direct phosphorylation. D6PK-mediated PIN phosphorylation promotes auxin transport in the hypocotyl and this is a prerequisite for PHOT1-dependent hypocotyl bending. This chain is Serine/threonine-protein kinase D6PKL1 (D6PKL1), found in Arabidopsis thaliana (Mouse-ear cress).